Consider the following 268-residue polypeptide: F-actin-capping protein subunit beta (268 aa).

The protein belongs to the F-actin-capping protein beta subunit family. In terms of assembly, component of the F-actin capping complex, composed of a heterodimer of an alpha and a beta subunit.

It is found in the cytoplasm. Its subcellular location is the cytoskeleton. The protein resides in the actin patch. It localises to the nucleus. Its function is as follows. F-actin-capping proteins bind in a Ca(2+)-independent manner to the fast growing ends of actin filaments (barbed end) thereby blocking the exchange of subunits at these ends. Unlike other capping proteins (such as gelsolin and severin), these proteins do not sever actin filaments. Competes with formin cdc12 for attachment to the actin filaments barbed ends. Slowly replaces cdc12 on the barbed ends in preparation for filament disassembly during contractile ring constriction. This Schizosaccharomyces pombe (strain 972 / ATCC 24843) (Fission yeast) protein is F-actin-capping protein subunit beta (acp2).